The chain runs to 353 residues: Photosystem II protein D1 (353 aa).

Threonine 2 is modified (N-acetylthreonine). A Phosphothreonine modification is found at threonine 2. Helical transmembrane passes span 29–46, 118–133, and 142–156; these read YIGWFGVLMIPTLLTATS, HFLLGVACYMGREWEL, and WIAVAYSAPVAAATA. Histidine 118 contributes to the chlorophyll a binding site. Tyrosine 126 contributes to the pheophytin a binding site. [CaMn4O5] cluster contacts are provided by aspartate 170 and glutamate 189. Residues 197–218 traverse the membrane as a helical segment; the sequence is FHMLGVAGVFGGSLFSAMHGSL. Residue histidine 198 participates in chlorophyll a binding. A quinone is bound by residues histidine 215 and 264 to 265; that span reads SF. Histidine 215 provides a ligand contact to Fe cation. Histidine 272 serves as a coordination point for Fe cation. Residues 274–288 traverse the membrane as a helical segment; that stretch reads FLAAWPVIGIWFTAL. Residues histidine 332, glutamate 333, aspartate 342, and alanine 344 each coordinate [CaMn4O5] cluster. Positions 345–353 are excised as a propeptide; it reads AIEAPSTNG.

This sequence belongs to the reaction center PufL/M/PsbA/D family. In terms of assembly, PSII is composed of 1 copy each of membrane proteins PsbA, PsbB, PsbC, PsbD, PsbE, PsbF, PsbH, PsbI, PsbJ, PsbK, PsbL, PsbM, PsbT, PsbX, PsbY, PsbZ, Psb30/Ycf12, at least 3 peripheral proteins of the oxygen-evolving complex and a large number of cofactors. It forms dimeric complexes. The cofactor is The D1/D2 heterodimer binds P680, chlorophylls that are the primary electron donor of PSII, and subsequent electron acceptors. It shares a non-heme iron and each subunit binds pheophytin, quinone, additional chlorophylls, carotenoids and lipids. D1 provides most of the ligands for the Mn4-Ca-O5 cluster of the oxygen-evolving complex (OEC). There is also a Cl(-1) ion associated with D1 and D2, which is required for oxygen evolution. The PSII complex binds additional chlorophylls, carotenoids and specific lipids.. Post-translationally, tyr-161 forms a radical intermediate that is referred to as redox-active TyrZ, YZ or Y-Z. In terms of processing, C-terminally processed by CTPA; processing is essential to allow assembly of the oxygen-evolving complex and thus photosynthetic growth.

It is found in the plastid. It localises to the chloroplast thylakoid membrane. The catalysed reaction is 2 a plastoquinone + 4 hnu + 2 H2O = 2 a plastoquinol + O2. Functionally, photosystem II (PSII) is a light-driven water:plastoquinone oxidoreductase that uses light energy to abstract electrons from H(2)O, generating O(2) and a proton gradient subsequently used for ATP formation. It consists of a core antenna complex that captures photons, and an electron transfer chain that converts photonic excitation into a charge separation. The D1/D2 (PsbA/PsbD) reaction center heterodimer binds P680, the primary electron donor of PSII as well as several subsequent electron acceptors. In Amaranthus hybridus (Slim amaranth), this protein is Photosystem II protein D1.